A 445-amino-acid polypeptide reads, in one-letter code: Phosphoglucosamine mutase (445 aa).

Residue serine 102 is the Phosphoserine intermediate of the active site. Positions 102, 241, 243, and 245 each coordinate Mg(2+). Serine 102 carries the phosphoserine modification.

The protein belongs to the phosphohexose mutase family. It depends on Mg(2+) as a cofactor. Post-translationally, activated by phosphorylation.

The enzyme catalyses alpha-D-glucosamine 1-phosphate = D-glucosamine 6-phosphate. Functionally, catalyzes the conversion of glucosamine-6-phosphate to glucosamine-1-phosphate. This chain is Phosphoglucosamine mutase, found in Acinetobacter baumannii (strain SDF).